We begin with the raw amino-acid sequence, 145 residues long: Maximins 5/H4 type 1 (145 aa).

A signal peptide spans 1–18; that stretch reads MNFKYIVAVSFLIASAYA. Propeptides lie at residues 19 to 43 and 74 to 124; these read RSVQNDEQSLSQRDVLEEESLREIR and TAEE…KEKR. A Leucine amide modification is found at leucine 144.

This sequence belongs to the bombinin family. In terms of tissue distribution, expressed by the skin glands.

The protein localises to the secreted. Its function is as follows. Maximin-5 shows antibacterial activity against both Gram-positive and Gram-negative bacteria. The only exception is the resistance of E.coli. Also shows antimicrobial activity against fungi C.albicans, A.flavus and P.uticale. It has little hemolytic activity. It does not possess a significant cytotoxicity against tumor cell lines. It does not possess a significant anti-HIV activity. Maximin-H4 shows antibacterial activity against both Gram-positive and Gram-negative bacteria. It also shows antimicrobial activity against the fungus C.albicans. Shows strong hemolytic activity. The polypeptide is Maximins 5/H4 type 1 (Bombina maxima (Giant fire-bellied toad)).